The primary structure comprises 105 residues: Small ribosomal subunit protein uS10 (105 aa).

The protein belongs to the universal ribosomal protein uS10 family. In terms of assembly, part of the 30S ribosomal subunit.

Functionally, involved in the binding of tRNA to the ribosomes. The protein is Small ribosomal subunit protein uS10 of Bdellovibrio bacteriovorus (strain ATCC 15356 / DSM 50701 / NCIMB 9529 / HD100).